A 513-amino-acid polypeptide reads, in one-letter code: ATP synthase subunit alpha (513 aa).

169-176 lines the ATP pocket; that stretch reads GDRQTGKT.

This sequence belongs to the ATPase alpha/beta chains family. In terms of assembly, F-type ATPases have 2 components, CF(1) - the catalytic core - and CF(0) - the membrane proton channel. CF(1) has five subunits: alpha(3), beta(3), gamma(1), delta(1), epsilon(1). CF(0) has three main subunits: a(1), b(2) and c(9-12). The alpha and beta chains form an alternating ring which encloses part of the gamma chain. CF(1) is attached to CF(0) by a central stalk formed by the gamma and epsilon chains, while a peripheral stalk is formed by the delta and b chains.

The protein localises to the cell inner membrane. It catalyses the reaction ATP + H2O + 4 H(+)(in) = ADP + phosphate + 5 H(+)(out). In terms of biological role, produces ATP from ADP in the presence of a proton gradient across the membrane. The alpha chain is a regulatory subunit. The protein is ATP synthase subunit alpha of Idiomarina loihiensis (strain ATCC BAA-735 / DSM 15497 / L2-TR).